A 340-amino-acid chain; its full sequence is Gallate dioxygenase (340 aa).

The active-site Proton donor is the histidine 45. Histidine 113 serves as the catalytic Proton acceptor.

It belongs to the LigB/MhpB extradiol dioxygenase family. Fe(2+) serves as cofactor.

It catalyses the reaction 3,4,5-trihydroxybenzoate + O2 = (1E)-4-oxobut-1-ene-1,2,4-tricarboxylate + 2 H(+). Ring-cleavage dioxygenase that acts specifically on gallate to produce the keto-tautomer of 4-oxalomesaconate. Mediates the first step of gallate degradation pathway. The protein is Gallate dioxygenase (galA) of Pseudomonas putida (strain ATCC 47054 / DSM 6125 / CFBP 8728 / NCIMB 11950 / KT2440).